The primary structure comprises 350 residues: Sperm equatorial segment protein 1 (350 aa).

A signal peptide spans 1–19; sequence MKPLVLLVALLLWPSSVPA. Asparagine 128 carries N-linked (GlcNAc...) asparagine glycosylation.

It belongs to the SPESP1 family. Post-translationally, glycosylated. In testis there are two predominant forms of 77- and 67-kDa and a form of 47-kDa, whereas in epididymal sperm from caput, corpus, and cauda there are two forms of 47- and 43-kDa. Testis forms contain complex carbohydrate residues. Epididymal sperm forms are N-glycosylated. Then undergoes significant glycosylation in the testis and that the majority of these glycoconjugates are removed by the time sperm reach the caput epididymis. As to expression, highly expressed in testis, where it is localized in the acrosome of postmeiotic stages of spermiogenesis (round and elongating spermatids and in ejaculated spermatozoa) (at protein level). Poorly expressed in placenta and fetal lung.

Its subcellular location is the cytoplasmic vesicle. The protein resides in the secretory vesicle. The protein localises to the acrosome. Functionally, involved in fertilization ability of sperm. This chain is Sperm equatorial segment protein 1, found in Homo sapiens (Human).